The primary structure comprises 278 residues: MVTGVASAMAERLKEDGNNCFKKERFGAAIDAYTEAIALSPNVPAYWTNRALCHMKRKDWTKVEEDCRKAIQLVHNSVKAHYMLGLALLQKKEFTNGVKELQRALDLGRCSNPTGYMVEEIWEELSKAKYMEWELVSAMRSWELNSLKETCEAALNQQRALDMSRTEESSDEAYTAHTERLKALERVFKKAAEEDKPTEVPDYLCCNITLEIFRDPVISPSGVTYERAAILEHLKKVGKFDPITREKIDPANLVPNLAIKEAVAAYLEKHVWAYKMGC.

3 TPR repeats span residues alanine 10–valine 43, alanine 45–serine 77, and valine 78–serine 111. Residues glutamate 143–glutamate 194 adopt a coiled-coil conformation. Residues glutamate 199 to alanine 273 enclose the U-box domain.

In terms of assembly, interacts with HSC70-4, PP2AA1, PP2AA3 and PP2A5, as well as with UBC8, UBC9 and UBC10. Also interacts with the chloroplastic proteolytic subunits ClpP4, FtsH1 and FtsH2.

It catalyses the reaction S-ubiquitinyl-[E2 ubiquitin-conjugating enzyme]-L-cysteine + [acceptor protein]-L-lysine = [E2 ubiquitin-conjugating enzyme]-L-cysteine + N(6)-ubiquitinyl-[acceptor protein]-L-lysine.. The protein operates within protein modification; protein ubiquitination. Its function is as follows. Has E3 ubiquitin-protein ligase activity and may target misfolded substrates towards proteasomal degradation. Regulates the activity of some serine/threonine-protein phosphatases by E3 ubiquitin-protein ligase activity. Required for responses to biotic and abiotic stresses such as auxin, abscisic acid (ABA), low and high temperature and darkness, probably through the activation of serine/threonine-protein phosphatase and the subsequent modification of the plasma membrane composition. Regulates the chloroplastic Clp proteolytic activity in response to stresses. Ubiquitylates FtsH1, a component of the chloroplast FtsH protease, and affects protein degradation in chloroplasts. Mediates plastid precursor degradation to prevent cytosolic precursor accumulation, together with the molecular chaperone HSC70-4. Mediates ubiquitination of transit peptides and thereby led to their degradation through the ubiquitin-proteasome system. The polypeptide is E3 ubiquitin-protein ligase CHIP (Arabidopsis thaliana (Mouse-ear cress)).